We begin with the raw amino-acid sequence, 129 residues long: Follitropin subunit beta (129 aa).

Residues 1–20 form the signal peptide; the sequence is MKTLQFFFLFCCWKAICCNS. 6 disulfide bridges follow: Cys21–Cys69, Cys35–Cys84, Cys38–Cys122, Cys46–Cys100, Cys50–Cys102, and Cys105–Cys112. N-linked (GlcNAc...) asparagine glycosylation is found at Asn25 and Asn42.

This sequence belongs to the glycoprotein hormones subunit beta family. Heterodimer. The active follitropin is a heterodimer composed of an alpha chain/CGA shared with other hormones and a unique beta chain/FSHB shown here.

It localises to the secreted. In terms of biological role, together with the alpha chain CGA constitutes follitropin, the follicle-stimulating hormone, and provides its biological specificity to the hormone heterodimer. Binds FSHR, a G protein-coupled receptor, on target cells to activate downstream signaling pathways. Follitropin is involved in follicle development and spermatogenesis in reproductive organs. This chain is Follitropin subunit beta (FSHB), found in Pan troglodytes (Chimpanzee).